The following is a 556-amino-acid chain: Secreted RxLR effector protein 114 (556 aa).

An N-terminal signal peptide occupies residues 1–19; it reads MCGAHFVAIALLVAAGCQT. Disordered stretches follow at residues 43–76, 108–138, and 389–408; these read LQSR…GVLK, NQLK…DSDK, and NDKS…EDWN. Positions 46 to 66 match the RxLR-dEER motif; it reads RNLRESRDSKDDLLSAGDEER. Residues 47-67 show a composition bias toward basic and acidic residues; that stretch reads NLRESRDSKDDLLSAGDEERT.

The protein belongs to the RxLR effector family.

Its subcellular location is the secreted. It localises to the host cell. Functionally, secreted effector that partially suppresses the host cell death induced by cell death-inducing proteins. The chain is Secreted RxLR effector protein 114 from Plasmopara viticola (Downy mildew of grapevine).